A 152-amino-acid polypeptide reads, in one-letter code: AIG2-like protein D (152 aa).

Residue 13–18 (YGSLMA) coordinates substrate. Glutamate 81 (proton acceptor) is an active-site residue.

The protein belongs to the gamma-glutamylcyclotransferase family. In terms of tissue distribution, expressed mainly in leaves.

Functionally, putative gamma-glutamylcyclotransferase. The sequence is that of AIG2-like protein D from Arabidopsis thaliana (Mouse-ear cress).